We begin with the raw amino-acid sequence, 433 residues long: Enolase (433 aa).

Gln-167 contacts (2R)-2-phosphoglycerate. The active-site Proton donor is Glu-209. Positions 246, 291, and 318 each coordinate Mg(2+). 4 residues coordinate (2R)-2-phosphoglycerate: Lys-343, Arg-372, Ser-373, and Lys-394. Catalysis depends on Lys-343, which acts as the Proton acceptor.

It belongs to the enolase family. Component of the RNA degradosome, a multiprotein complex involved in RNA processing and mRNA degradation. Requires Mg(2+) as cofactor.

Its subcellular location is the cytoplasm. It is found in the secreted. The protein localises to the cell surface. It catalyses the reaction (2R)-2-phosphoglycerate = phosphoenolpyruvate + H2O. It functions in the pathway carbohydrate degradation; glycolysis; pyruvate from D-glyceraldehyde 3-phosphate: step 4/5. In terms of biological role, catalyzes the reversible conversion of 2-phosphoglycerate (2-PG) into phosphoenolpyruvate (PEP). It is essential for the degradation of carbohydrates via glycolysis. In Photorhabdus laumondii subsp. laumondii (strain DSM 15139 / CIP 105565 / TT01) (Photorhabdus luminescens subsp. laumondii), this protein is Enolase.